The following is a 335-amino-acid chain: Beta-ketoacyl-[acyl-carrier-protein] synthase III (335 aa).

Residues C119 and H261 contribute to the active site. The segment at 262–266 (QANQR) is ACP-binding. The active site involves N291.

Belongs to the thiolase-like superfamily. FabH family. In terms of assembly, homodimer.

Its subcellular location is the cytoplasm. The enzyme catalyses malonyl-[ACP] + acetyl-CoA + H(+) = 3-oxobutanoyl-[ACP] + CO2 + CoA. Its pathway is lipid metabolism; fatty acid biosynthesis. Its function is as follows. Catalyzes the condensation reaction of fatty acid synthesis by the addition to an acyl acceptor of two carbons from malonyl-ACP. Catalyzes the first condensation reaction which initiates fatty acid synthesis and may therefore play a role in governing the total rate of fatty acid production. Possesses both acetoacetyl-ACP synthase and acetyl transacylase activities. Its substrate specificity determines the biosynthesis of branched-chain and/or straight-chain of fatty acids. The chain is Beta-ketoacyl-[acyl-carrier-protein] synthase III from Prochlorococcus marinus (strain MIT 9215).